The following is a 469-amino-acid chain: Cell division protein FtsP (469 aa).

Residues methionine 1–alanine 29 constitute a signal peptide (tat-type signal). The Plastocyanin-like domain maps to isoleucine 228–glutamate 286.

This sequence belongs to the FtsP family. In terms of processing, predicted to be exported by the Tat system. The position of the signal peptide cleavage has not been experimentally proven.

It localises to the periplasm. Its function is as follows. Cell division protein that is required for growth during stress conditions. May be involved in protecting or stabilizing the divisomal assembly under conditions of stress. In Haemophilus influenzae (strain 86-028NP), this protein is Cell division protein FtsP.